We begin with the raw amino-acid sequence, 230 residues long: RNA chaperone ProQ (230 aa).

Residues 106-181 (AKARVQAQRA…EERHTPVSDI (76 aa)) are disordered. Residues 146 to 155 (RRKDNAERKP) are compositionally biased toward basic and acidic residues. Positions 158-167 (AKPAAAAKPS) are enriched in low complexity.

Belongs to the ProQ family.

The protein resides in the cytoplasm. Its function is as follows. RNA chaperone with significant RNA binding, RNA strand exchange and RNA duplexing activities. May regulate ProP activity through an RNA-based, post-transcriptional mechanism. The chain is RNA chaperone ProQ from Cronobacter sakazakii (strain ATCC BAA-894) (Enterobacter sakazakii).